A 206-amino-acid polypeptide reads, in one-letter code: Ribonuclease HII (206 aa).

One can recognise an RNase H type-2 domain in the interval 1-206; that stretch reads MKVLGIDEAG…SWATVQKKKQ (206 aa). 3 residues coordinate a divalent metal cation: Asp-7, Glu-8, and Asp-105.

This sequence belongs to the RNase HII family. Requires Mn(2+) as cofactor. The cofactor is Mg(2+).

The protein localises to the cytoplasm. The enzyme catalyses Endonucleolytic cleavage to 5'-phosphomonoester.. In terms of biological role, endonuclease that specifically degrades the RNA of RNA-DNA hybrids. This is Ribonuclease HII (rnhB) from Methanothermobacter thermautotrophicus (strain ATCC 29096 / DSM 1053 / JCM 10044 / NBRC 100330 / Delta H) (Methanobacterium thermoautotrophicum).